The following is a 291-amino-acid chain: Taste receptor type 2 member 16 (291 aa).

Position 1 (methionine 1) is a topological domain, extracellular. Residues 2 to 22 (IPIQLTVFFMIIYVLESLTII) traverse the membrane as a helical segment. Residues 23-41 (VQSSLIVAVLGREWLQVRR) lie on the Cytoplasmic side of the membrane. Residues 42 to 62 (LMPVDMILISLGISRFCLQWA) form a helical membrane-spanning segment. Residues 63-84 (SMLNNFCSYFNLNYVLCNLTIT) lie on the Extracellular side of the membrane. N-linked (GlcNAc...) asparagine glycosylation is present at asparagine 80. The chain crosses the membrane as a helical span at residues 85 to 105 (WEFFNILTFWLNSLLTVFYCI). Residues 106–125 (KASSFTHHIFLWLRWRILRL) are Cytoplasmic-facing. A helical membrane pass occupies residues 126–146 (FPWILLGSLMITCVTIIPSAI). Topologically, residues 147 to 182 (GNYIQIQLLTMEHLPRNSTVTDKLEKFHQYQFQAHT) are extracellular. Asparagine 163 carries N-linked (GlcNAc...) asparagine glycosylation. The helical transmembrane segment at 183 to 203 (VALVIPFILFLASTILLMASL) threads the bilayer. Over 204 to 228 (TKQIQHHSTGHCNPSMKAHFTALRS) the chain is Cytoplasmic. The chain crosses the membrane as a helical span at residues 229–249 (LAVLFIVFTSYFLTILITIIG). The Extracellular portion of the chain corresponds to 250-257 (TLFDKRCW). A helical membrane pass occupies residues 258 to 278 (LWVWEAFVYAFILMHSTSLML). Residues 279–291 (SSPTLKRILKGKC) are Cytoplasmic-facing.

This sequence belongs to the G-protein coupled receptor T2R family. In terms of assembly, interacts with RTP3 and RTP4.

It localises to the cell membrane. In terms of biological role, receptor that may play a role in the perception of bitterness and is gustducin-linked. May play a role in sensing the chemical composition of the gastrointestinal content. The activity of this receptor may stimulate alpha gustducin, mediate PLC-beta-2 activation and lead to the gating of TRPM5. This Pan paniscus (Pygmy chimpanzee) protein is Taste receptor type 2 member 16 (TAS2R16).